Reading from the N-terminus, the 298-residue chain is Tyrosine recombinase XerC (298 aa).

Positions 1–84 (MNHIQEAFLN…TLRTFYEYWM (84 aa)) constitute a Core-binding (CB) domain. A Tyr recombinase domain is found at 105–286 (YLPQFFYEEE…SNQQLRKVYL (182 aa)). Active-site residues include Arg145, Lys169, His238, Arg241, and His264. The active-site O-(3'-phospho-DNA)-tyrosine intermediate is the Tyr273.

The protein belongs to the 'phage' integrase family. XerC subfamily. In terms of assembly, forms a cyclic heterotetrameric complex composed of two molecules of XerC and two molecules of XerD.

It is found in the cytoplasm. Its function is as follows. Site-specific tyrosine recombinase, which acts by catalyzing the cutting and rejoining of the recombining DNA molecules. The XerC-XerD complex is essential to convert dimers of the bacterial chromosome into monomers to permit their segregation at cell division. It also contributes to the segregational stability of plasmids. This is Tyrosine recombinase XerC from Staphylococcus aureus (strain Mu3 / ATCC 700698).